The following is a 269-amino-acid chain: AA9 family lytic polysaccharide monooxygenase I (269 aa).

Positions Met1 to Ala17 are cleaved as a signal peptide. Cu(2+) contacts are provided by His18 and His103. The cysteines at positions 73 and 196 are disulfide-linked. Asn156 carries an N-linked (GlcNAc...) asparagine glycan. 2 residues coordinate O2: His182 and Gln191. Cu(2+) is bound at residue Tyr193.

It belongs to the polysaccharide monooxygenase AA9 family. Cu(2+) is required as a cofactor.

The protein resides in the secreted. The enzyme catalyses [(1-&gt;4)-beta-D-glucosyl]n+m + reduced acceptor + O2 = 4-dehydro-beta-D-glucosyl-[(1-&gt;4)-beta-D-glucosyl]n-1 + [(1-&gt;4)-beta-D-glucosyl]m + acceptor + H2O.. Lytic polysaccharide monooxygenase (LPMO) that depolymerizes crystalline and amorphous polysaccharides via the oxidation of scissile alpha- or beta-(1-4)-glycosidic bonds, yielding C1 and C4 oxidation products. Catalysis by LPMOs requires the reduction of the active-site copper from Cu(II) to Cu(I) by a reducing agent and H(2)O(2) or O(2) as a cosubstrate. The chain is AA9 family lytic polysaccharide monooxygenase I from Botryotinia fuckeliana (strain B05.10) (Noble rot fungus).